The sequence spans 228 residues: UPF0173 metal-dependent hydrolase LMHCC_0991 (228 aa).

It belongs to the UPF0173 family.

The polypeptide is UPF0173 metal-dependent hydrolase LMHCC_0991 (Listeria monocytogenes serotype 4a (strain HCC23)).